The sequence spans 211 residues: Protein 33K (211 aa).

Disordered regions lie at residues 1–95 (MPPK…PCSL) and 107–140 (AGSP…QDSP). Positions 24–65 (DEEETWDDSQAEEVSDEEAEEQMESWDSLDEEDLEDVEEETI) are enriched in acidic residues. A compositionally biased stretch (pro residues) spans 83–92 (KTIPPLPPQP). Polar residues predominate over residues 129 to 140 (TSSAIATRQDSP). The tract at residues 154-181 (YAIFQQSRGQQLELKVKNRSLRSLTRSC) is necessary for nuclear subcellular location. An RS-repeat; required for splicing enhancer activity region spans residues 160-180 (SRGQQLELKVKNRSLRSLTRS).

Belongs to the adenoviridae splicing factor family. In terms of assembly, homooligomer. Interacts with DBP; this interaction occurs at a unique vertex during genome packaging. Interacts with IVa2; this interaction occurs at a unique vertex during genome packaging and seems to potentiate IVa2 and 33K oligomerization. In terms of processing, phosphorylated in vitro by human PKA and PRKDC. PRKDC inhibits, whereas PKA activates the splicing factor.

The protein resides in the host nucleus. Its function is as follows. Promotes alternative splicing of late transcripts by promoting splicing at weak 3' splice sites. Required for the temporal activation of major late pre-mRNA splicing at late times of infection. Induces the splicing and expression of the late capsid vertex protein. Functionally, probably functions as the small terminase that is part of the molecular motor that translocates genomic DNA in empty capsid during DNA packaging. This motor is located at a unique vertex and comprises at least the IVa2 ATPase, the small terminase 33K and probably a portal. Forms a ring-like structure of about 17 nm in which genomic DNA is translocated into the capsid. Stimulates IVa2 ATPase activity in the presence of the viral genome. Once the DNA is packaged, the terminase detaches: the 33K protein is present in the empty particles, but not in the mature virions. Also involved in virion assembly. In Human adenovirus F serotype 40 (HAdV-40), this protein is Protein 33K.